Here is a 189-residue protein sequence, read N- to C-terminus: Putative manganese efflux pump MntP (189 aa).

A run of 6 helical transmembrane segments spans residues 3-23 (LSAT…ASIG), 41-61 (LIFG…GLFA), 65-85 (IMEW…CRMI), 104-124 (FWVL…IGVG), 132-152 (IVHT…LGML), and 167-187 (IIGG…HMHL).

This sequence belongs to the MntP (TC 9.B.29) family.

The protein localises to the cell inner membrane. Probably functions as a manganese efflux pump. This is Putative manganese efflux pump MntP from Yersinia pseudotuberculosis serotype O:1b (strain IP 31758).